A 63-amino-acid chain; its full sequence is Large ribosomal subunit protein bL32 (63 aa).

Positions Met-1–Ala-18 are enriched in basic residues. Residues Met-1 to Lys-25 are disordered.

This sequence belongs to the bacterial ribosomal protein bL32 family.

The sequence is that of Large ribosomal subunit protein bL32 from Chlorobium phaeovibrioides (strain DSM 265 / 1930) (Prosthecochloris vibrioformis (strain DSM 265)).